Here is a 1250-residue protein sequence, read N- to C-terminus: Phospholipid-transporting ATPase IC (1250 aa).

Acidic residues-rich tracts occupy residues 1–13 and 24–40; these read MDTDYESTYEDDS and SDDETDDELDSPQTDEP. Residues 1-52 are disordered; the sequence is MDTDYESTYEDDSQVPNDDVVPYSDDETDDELDSPQTDEPEQNRRNVQAEQS. Residues 1-133 lie on the Cytoplasmic side of the membrane; the sequence is MDTDYESTYE…VLLILQTIPQ (133 aa). The chain crosses the membrane as a helical span at residues 134–154; it reads ISTVTWSTTLIPLLLVLGITA. Over 155–338 the chain is Exoplasmic loop; that stretch reads IKDLVDDIAR…TKIDYLMNYM (184 aa). Residues 339-359 traverse the membrane as a helical segment; sequence VYTIFVLLILAAAGLAIGQTF. Residues 360-385 are Cytoplasmic-facing; sequence WEAKLGAANVSWYLYDGNNYSPSYRG. A helical membrane pass occupies residues 386–406; the sequence is FLAFWGYIIVLNTMVPISLYV. The Exoplasmic loop segment spans residues 407-956; that stretch reads SVEVIRLGQS…KFLRYFFYKN (550 aa). The active-site 4-aspartylphosphate intermediate is aspartate 454. ATP is bound by residues aspartate 454, lysine 455, threonine 456, glutamate 553, phenylalanine 594, lysine 617, arginine 650, threonine 730, glycine 731, aspartate 732, arginine 865, and lysine 871. Aspartate 454 lines the Mg(2+) pocket. Threonine 456 contributes to the Mg(2+) binding site. Aspartate 891 is a binding site for Mg(2+). Positions 894 and 895 each coordinate ATP. Aspartate 895 contacts Mg(2+). Residues 957-977 traverse the membrane as a helical segment; sequence FSFTLVHFWYSFFNGFSAQTV. Over 978 to 980 the chain is Cytoplasmic; that stretch reads YED. Residues 981 to 1001 traverse the membrane as a helical segment; it reads WFITLYNVLYSSLPVLLVGLL. Topologically, residues 1002–1034 are exoplasmic loop; that stretch reads DQDVSDKLSLAFPRLYVPGQKDLLFNYKKFFLS. A helical membrane pass occupies residues 1035–1055; the sequence is LFHGIVTSLIIFFIPYGAFLL. Topologically, residues 1056–1069 are cytoplasmic; that stretch reads TMGQDGEAPSDYQS. Residues 1070 to 1090 traverse the membrane as a helical segment; the sequence is FAVTTATALVITVNFQIGLDT. Over 1091–1092 the chain is Exoplasmic loop; the sequence is SY. Residues 1093 to 1113 traverse the membrane as a helical segment; sequence WTFVNAFSIFGSIAIYFGIMF. The Cytoplasmic portion of the chain corresponds to 1114–1117; that stretch reads DLHS. Residues 1118-1138 traverse the membrane as a helical segment; sequence AGIHVLFPSMFIFTGAAPNAL. Residues 1139 to 1140 are Exoplasmic loop-facing; that stretch reads RQ. A helical membrane pass occupies residues 1141–1161; that stretch reads PYLWLTIILTVAFCLLPIVAL. At 1162 to 1250 the chain is on the cytoplasmic side; the sequence is RFLAKTIWPS…AQITHFTPQT (89 aa).

The protein belongs to the cation transport ATPase (P-type) (TC 3.A.3) family. Type IV subfamily. Component of a P4-ATPase flippase complex which consists of a catalytic alpha subunit and an accessory beta subunit. The flippase ATP8B1:TMEM30A complex can form an intermediate phosphoenzyme in vitro. Also interacts with beta subunit TMEM30B. It depends on Mg(2+) as a cofactor.

It localises to the cell membrane. The protein localises to the apical cell membrane. It is found in the cell projection. The protein resides in the stereocilium. Its subcellular location is the endoplasmic reticulum. It localises to the golgi apparatus. It catalyses the reaction ATP + H2O + phospholipidSide 1 = ADP + phosphate + phospholipidSide 2.. The catalysed reaction is a 1,2-diacyl-sn-glycero-3-phospho-L-serine(out) + ATP + H2O = a 1,2-diacyl-sn-glycero-3-phospho-L-serine(in) + ADP + phosphate + H(+). Functionally, catalytic component of a P4-ATPase flippase complex which catalyzes the hydrolysis of ATP coupled to the transport of aminophospholipids from the outer to the inner leaflet of various membranes and ensures the maintenance of asymmetric distribution of phospholipids. Phospholipid translocation also seems to be implicated in vesicle formation and in uptake of lipid signaling molecules. May also participate in the establishment of the canalicular membrane integrity by ensuring asymmetric distribution of phospholipids in the canicular membrane. This is Phospholipid-transporting ATPase IC (atp8b1) from Xenopus tropicalis (Western clawed frog).